The sequence spans 138 residues: Gap junction alpha-4 protein (138 aa).

The Cytoplasmic portion of the chain corresponds to 1-16 (DWGFLEKLLDQVQEHS). Residues 17–39 (TVVGKIWLTVLFIFRILILGLAG) traverse the membrane as a helical segment. At 40–74 (ESVWGDEQSDFECNTAQPGCTNVCYDQAFPISHIP) the chain is on the extracellular side. Residues 75–97 (YWVLQFLFVSTPTLVYLGHVIYL) traverse the membrane as a helical segment. The Cytoplasmic portion of the chain corresponds to 98–138 (SRREERLRQKEGELRALPDKDPRVERALAGIERQMAKISVA).

The protein belongs to the connexin family. Alpha-type (group II) subfamily. In terms of assembly, a connexon is composed of a hexamer of connexins.

The protein localises to the cell membrane. It is found in the cell junction. The protein resides in the gap junction. In terms of biological role, one gap junction consists of a cluster of closely packed pairs of transmembrane channels, the connexons, through which materials of low MW diffuse from one cell to a neighboring cell. This is Gap junction alpha-4 protein (GJA4) from Sus scrofa (Pig).